The primary structure comprises 236 residues: Demethylmenaquinone methyltransferase (236 aa).

Residues T58, D79, and 106 to 107 contribute to the S-adenosyl-L-methionine site; that span reads NA.

It belongs to the class I-like SAM-binding methyltransferase superfamily. MenG/UbiE family.

It catalyses the reaction a 2-demethylmenaquinol + S-adenosyl-L-methionine = a menaquinol + S-adenosyl-L-homocysteine + H(+). It functions in the pathway quinol/quinone metabolism; menaquinone biosynthesis; menaquinol from 1,4-dihydroxy-2-naphthoate: step 2/2. Its function is as follows. Methyltransferase required for the conversion of demethylmenaquinol (DMKH2) to menaquinol (MKH2). The sequence is that of Demethylmenaquinone methyltransferase from Listeria welshimeri serovar 6b (strain ATCC 35897 / DSM 20650 / CCUG 15529 / CIP 8149 / NCTC 11857 / SLCC 5334 / V8).